A 341-amino-acid chain; its full sequence is Phenylalanine--tRNA ligase alpha subunit (341 aa).

Glu254 provides a ligand contact to Mg(2+).

This sequence belongs to the class-II aminoacyl-tRNA synthetase family. Phe-tRNA synthetase alpha subunit type 1 subfamily. As to quaternary structure, tetramer of two alpha and two beta subunits. It depends on Mg(2+) as a cofactor.

The protein localises to the cytoplasm. The catalysed reaction is tRNA(Phe) + L-phenylalanine + ATP = L-phenylalanyl-tRNA(Phe) + AMP + diphosphate + H(+). This chain is Phenylalanine--tRNA ligase alpha subunit (pheS), found in Mycoplasma genitalium (strain ATCC 33530 / DSM 19775 / NCTC 10195 / G37) (Mycoplasmoides genitalium).